The primary structure comprises 440 residues: Streptokinase C (440 aa).

An N-terminal signal peptide occupies residues 1–26; that stretch reads MKNYLSFGMFALLFALTFGTVNSVQA.

Functionally, this protein is not a protease, but it activates plasminogen by complexing with it. As a potential virulence factor, it is thought to prevent the formation of effective fibrin barriers around the site of infection, thereby contributing to the invasiveness of the cells. This is Streptokinase C (skc) from Streptococcus dysgalactiae subsp. equisimilis (Streptococcus equisimilis).